The following is a 160-amino-acid chain: Salivary gland broad-spectrum antiviral protein (160 aa).

A helical membrane pass occupies residues Val17–Leu37. Asn62 and Asn145 each carry an N-linked (GlcNAc...) asparagine glycan.

As to expression, salivary gland (at protein level).

It localises to the membrane. (Microbial infection) Modulates replication of Zika virus in salivary glands. Its function is as follows. (Microbial infection) Modulates replication of dengue virus type 2 in salivary glands. In terms of biological role, (Microbial infection) Modulates replication of chikungunya virus in salivary glands. This chain is Salivary gland broad-spectrum antiviral protein, found in Aedes aegypti (Yellowfever mosquito).